The chain runs to 447 residues: MTTILKHLPAGQRIGIAFSGGLDTSAALLWMRQKGAVPYAYTANLGQPDEDDYDAIPRRAMEYGAENARLIDCRKQLVAEGIAAIQCGAFHNTTGGLTYFNTTPLGRAVTGTMLVAAMKEDGVNIWGDGSTYKGNDIERFYRYGLLTNAELQIYKPWLDTDFIDELGGRHEMSEFMIACGFDYKMSVEKAYSTDSNMLGATHEAKDLEFLNSSVKIVNPIMGVKFWDESVKIPAEEVTVRFEQGHPVALNGKTFSDDVEMMLEANRIGGRHGLGMSDQIENRIIEAKSRGIYEAPGMALLHIAYERLLTGIHNEDTIEQYHSHGRQLGKLLYQGRWFDSQALMLRDGLQRWVASQITGEVTLELRRGNDYSILNTVSDNLTYKAERLTMEKGESVFSPDDRIGQLTMRNLDITDTREKLFGYAKAGLLTASSATGLPQVENLENKAK.

Residues 17–25 (AFSGGLDTS) and A43 contribute to the ATP site. An L-citrulline-binding site is contributed by Y99. ATP contacts are provided by G129 and T131. L-aspartate contacts are provided by T131, N135, and D136. An L-citrulline-binding site is contributed by N135. D136 lines the ATP pocket. The L-citrulline site is built by R139 and S192. D194 lines the ATP pocket. Residues T201, E203, and E280 each contribute to the L-citrulline site.

It belongs to the argininosuccinate synthase family. Type 2 subfamily. Homotetramer.

It is found in the cytoplasm. The catalysed reaction is L-citrulline + L-aspartate + ATP = 2-(N(omega)-L-arginino)succinate + AMP + diphosphate + H(+). It functions in the pathway amino-acid biosynthesis; L-arginine biosynthesis; L-arginine from L-ornithine and carbamoyl phosphate: step 2/3. The polypeptide is Argininosuccinate synthase (argG) (Salmonella typhi).